A 430-amino-acid chain; its full sequence is Adenylosuccinate synthetase (430 aa).

Residues Gly-12–Lys-18 and Gly-40–Thr-42 contribute to the GTP site. The active-site Proton acceptor is the Asp-13. The Mg(2+) site is built by Asp-13 and Gly-40. Residues Asp-13 to Lys-16, Asn-38 to His-41, Thr-130, Arg-144, Gln-224, Thr-239, and Arg-303 contribute to the IMP site. His-41 serves as the catalytic Proton donor. Thr-299–Arg-305 contributes to the substrate binding site. GTP is bound by residues Arg-305, Lys-331–Asp-333, and Ser-413–Ser-415.

It belongs to the adenylosuccinate synthetase family. Homodimer. The cofactor is Mg(2+).

It is found in the cytoplasm. It catalyses the reaction IMP + L-aspartate + GTP = N(6)-(1,2-dicarboxyethyl)-AMP + GDP + phosphate + 2 H(+). It participates in purine metabolism; AMP biosynthesis via de novo pathway; AMP from IMP: step 1/2. In terms of biological role, plays an important role in the de novo pathway of purine nucleotide biosynthesis. Catalyzes the first committed step in the biosynthesis of AMP from IMP. In Pelagibacter ubique (strain HTCC1062), this protein is Adenylosuccinate synthetase.